A 516-amino-acid polypeptide reads, in one-letter code: 2-isopropylmalate synthase (516 aa).

The region spanning 5-267 is the Pyruvate carboxyltransferase domain; the sequence is VIIFDTTLRD…STNIVHKEIY (263 aa). Positions 14, 202, 204, and 238 each coordinate Mn(2+). A regulatory domain region spans residues 392-516; it reads YLKFFSVQSI…NKKLKNLKKY (125 aa).

The protein belongs to the alpha-IPM synthase/homocitrate synthase family. LeuA type 1 subfamily. Homodimer. The cofactor is Mn(2+).

Its subcellular location is the cytoplasm. It catalyses the reaction 3-methyl-2-oxobutanoate + acetyl-CoA + H2O = (2S)-2-isopropylmalate + CoA + H(+). It functions in the pathway amino-acid biosynthesis; L-leucine biosynthesis; L-leucine from 3-methyl-2-oxobutanoate: step 1/4. Functionally, catalyzes the condensation of the acetyl group of acetyl-CoA with 3-methyl-2-oxobutanoate (2-ketoisovalerate) to form 3-carboxy-3-hydroxy-4-methylpentanoate (2-isopropylmalate). The chain is 2-isopropylmalate synthase from Buchnera aphidicola subsp. Diuraphis noxia.